The chain runs to 234 residues: Adenosine 5'-phosphosulfate reductase (234 aa).

4 residues coordinate [4Fe-4S] cluster: C120, C121, C203, and C206. C229 (nucleophile; cysteine thiosulfonate intermediate) is an active-site residue.

It belongs to the PAPS reductase family. CysH subfamily. The cofactor is [4Fe-4S] cluster.

It localises to the cytoplasm. The enzyme catalyses [thioredoxin]-disulfide + sulfite + AMP + 2 H(+) = adenosine 5'-phosphosulfate + [thioredoxin]-dithiol. It functions in the pathway sulfur metabolism; hydrogen sulfide biosynthesis; sulfite from sulfate. Catalyzes the formation of sulfite from adenosine 5'-phosphosulfate (APS) using thioredoxin as an electron donor. The sequence is that of Adenosine 5'-phosphosulfate reductase from Bacillus cereus (strain Q1).